The sequence spans 334 residues: tRNA uridine(34) hydroxylase (334 aa).

One can recognise a Rhodanese domain in the interval 123-217; the sequence is SDPDVILVDT…YLEEVKQEES (95 aa). Cysteine 177 serves as the catalytic Cysteine persulfide intermediate.

The protein belongs to the TrhO family.

It carries out the reaction uridine(34) in tRNA + AH2 + O2 = 5-hydroxyuridine(34) in tRNA + A + H2O. Functionally, catalyzes oxygen-dependent 5-hydroxyuridine (ho5U) modification at position 34 in tRNAs. This chain is tRNA uridine(34) hydroxylase, found in Shewanella putrefaciens (strain CN-32 / ATCC BAA-453).